A 429-amino-acid chain; its full sequence is DNA dC-&gt;dU-editing enzyme APOBEC3 (429 aa).

2 CMP/dCMP-type deaminase domains span residues 38–154 (DRKD…AQVA) and 238–357 (EEEF…LCSL). Zn(2+) is bound at residue histidine 71. Catalysis depends on glutamate 73, which acts as the Proton donor. The Zn(2+) site is built by cysteine 105, cysteine 108, histidine 288, cysteine 316, and cysteine 319.

Belongs to the cytidine and deoxycytidylate deaminase family. In terms of assembly, homodimer. Requires Zn(2+) as cofactor.

Its subcellular location is the cytoplasm. It catalyses the reaction a 2'-deoxycytidine in single-stranded DNA + H2O + H(+) = a 2'-deoxyuridine in single-stranded DNA + NH4(+). Functionally, DNA deaminase (cytidine deaminase) which acts as an inhibitor of retrovirus replication and retrotransposon mobility via deaminase-dependent and -independent mechanisms. Selectively targets single-stranded DNA and does not deaminate double-stranded DNA or single- or double-stranded RNA. This is DNA dC-&gt;dU-editing enzyme APOBEC3 (Apobec3) from Rattus norvegicus (Rat).